The chain runs to 127 residues: Glycine cleavage system H protein (127 aa).

In terms of domain architecture, Lipoyl-binding spans 24 to 105 (TALVGITDFA…YEDGWMVKVS (82 aa)). K65 carries the N6-lipoyllysine modification.

Belongs to the GcvH family. In terms of assembly, the glycine cleavage system is composed of four proteins: P, T, L and H. It depends on (R)-lipoate as a cofactor.

Its function is as follows. The glycine cleavage system catalyzes the degradation of glycine. The H protein shuttles the methylamine group of glycine from the P protein to the T protein. The sequence is that of Glycine cleavage system H protein from Prosthecochloris aestuarii (strain DSM 271 / SK 413).